Here is a 248-residue protein sequence, read N- to C-terminus: UDP-2,3-diacylglucosamine hydrolase (248 aa).

Mn(2+)-binding residues include Asp7, His9, Asp40, Asn78, and His113. Position 78 to 79 (78 to 79 (NR)) interacts with substrate. Substrate is bound by residues Asp121, Ser159, Thr163, Lys166, and His194. Mn(2+)-binding residues include His194 and His196.

This sequence belongs to the LpxH family. Mn(2+) is required as a cofactor.

The protein resides in the cell inner membrane. It catalyses the reaction UDP-2-N,3-O-bis[(3R)-3-hydroxytetradecanoyl]-alpha-D-glucosamine + H2O = 2-N,3-O-bis[(3R)-3-hydroxytetradecanoyl]-alpha-D-glucosaminyl 1-phosphate + UMP + 2 H(+). The protein operates within glycolipid biosynthesis; lipid IV(A) biosynthesis; lipid IV(A) from (3R)-3-hydroxytetradecanoyl-[acyl-carrier-protein] and UDP-N-acetyl-alpha-D-glucosamine: step 4/6. In terms of biological role, hydrolyzes the pyrophosphate bond of UDP-2,3-diacylglucosamine to yield 2,3-diacylglucosamine 1-phosphate (lipid X) and UMP by catalyzing the attack of water at the alpha-P atom. Involved in the biosynthesis of lipid A, a phosphorylated glycolipid that anchors the lipopolysaccharide to the outer membrane of the cell. The chain is UDP-2,3-diacylglucosamine hydrolase from Pseudomonas fluorescens (strain Pf0-1).